The chain runs to 205 residues: RPW8-like protein 2 (205 aa).

The 153-residue stretch at 1-153 folds into the RPW8 domain; it reads MPLTEIIAGA…IMGQPIDCII (153 aa). The chain crosses the membrane as a helical span at residues 7 to 23; that stretch reads IAGAALGLALQILHEAI. Coiled coils occupy residues 70-92 and 125-147; these read EDLK…LKRR and ADIK…IMGQ.

This sequence belongs to the plant RPW8 protein family.

It localises to the membrane. In terms of biological role, probable disease resistance (R) protein. This chain is RPW8-like protein 2, found in Arabidopsis thaliana (Mouse-ear cress).